Here is a 204-residue protein sequence, read N- to C-terminus: Elongation factor Ts (204 aa).

An involved in Mg(2+) ion dislocation from EF-Tu region spans residues 87-90 (TDFV).

It belongs to the EF-Ts family.

The protein resides in the cytoplasm. Its function is as follows. Associates with the EF-Tu.GDP complex and induces the exchange of GDP to GTP. It remains bound to the aminoacyl-tRNA.EF-Tu.GTP complex up to the GTP hydrolysis stage on the ribosome. This is Elongation factor Ts from Frankia alni (strain DSM 45986 / CECT 9034 / ACN14a).